The chain runs to 614 residues: MDGKVAVQECGPPAVSWVPEEGEKLDQEDEDQVKDRGQWTNKMEFVLSVAGEIIGLGNVWRFPYLCYKNGGGAFFIPYFIFFFVCGIPVFFLEVALGQYTSQGSVTAWRKICPLFQGIGLASVVIESYLNVYYIIILAWALFYLFSSFTSELPWTTCNNFWNTEHCTDFLNHSGAGTVTPFENFTSPVMEFWERRVLGITSGIHDLGSLRWELALCLLLAWVICYFCIWKGVKSTGKVVYFTATFPYLMLVILLIRGVTLPGAYQGIIYYLKPDLFRLKDPQVWMDAGTQIFFSFAICQGCLTALGSYNKYHNNCYKDCIALCFLNSATSFVAGFVVFSILGFMSQEQGVPISEVAESGPGLAFIAFPKAVTMMPLSQLWSCLFFIMLIFLGLDSQFVCVECLVTASIDMFPRQLRKSGRRELLILTIAVMCYLIGLFLVTEGGMYIFQLFDYYASSGICLLFLSLFEVVCISWVYGADRFYDNIEDMIGYRPWPLVKISWLFLTPGLCLATFLFSLSKYTPLKYNNVYVYPPWGYSIGWFLALSSMVCVPLFVVITLLKTRGPFRKRLRQLITPDSSLPQPKQHPCLDGSAGRNFGPSPTREGLIAGEKETHL.

Topologically, residues 1–44 (MDGKVAVQECGPPAVSWVPEEGEKLDQEDEDQVKDRGQWTNKME) are cytoplasmic. A run of 3 helical transmembrane segments spans residues 45-65 (FVLS…FPYL), 73-92 (AFFI…VFFL), and 117-137 (GIGL…IIIL). Over 138–210 (AWALFYLFSS…SGIHDLGSLR (73 aa)) the chain is Extracellular. An intrachain disulfide couples Cys157 to Cys166. 2 N-linked (GlcNAc...) asparagine glycosylation sites follow: Asn171 and Asn183. 9 helical membrane-spanning segments follow: residues 211–229 (WELA…FCIW), 238–255 (VVYF…ILLI), 291–308 (IFFS…LGSY), 320–341 (IALC…FSIL), 374–393 (MPLS…FLGL), 423–441 (LLIL…FLVT), 458–478 (GICL…VYGA), 499–518 (ISWL…FSLS), and 538–556 (IGWF…FVVI). Over 557-614 (TLLKTRGPFRKRLRQLITPDSSLPQPKQHPCLDGSAGRNFGPSPTREGLIAGEKETHL) the chain is Cytoplasmic. The segment at 576–614 (DSSLPQPKQHPCLDGSAGRNFGPSPTREGLIAGEKETHL) is disordered.

It belongs to the sodium:neurotransmitter symporter (SNF) (TC 2.A.22) family. SLC6A12 subfamily. As to quaternary structure, interacts with LIN7C. In terms of tissue distribution, expressed in kidney, liver, heart, skeletal muscle, placenta, and a widespread distribution in the brain.

The protein resides in the basolateral cell membrane. Its subcellular location is the cell membrane. It carries out the reaction 4-aminobutanoate(out) + chloride(out) + 3 Na(+)(out) = 4-aminobutanoate(in) + chloride(in) + 3 Na(+)(in). It catalyses the reaction glycine betaine(out) + 2 chloride(out) + 3 Na(+)(out) = glycine betaine(in) + 2 chloride(in) + 3 Na(+)(in). Transporter that mediates cellular uptake of betaine and GABA in a sodium- and chloride-dependent process. May have a role in regulation of GABAergic transmission in the brain through the reuptake of GABA into presynaptic terminals, as well as in osmotic regulation. Probably also involved in renal and hepatic osmotic regulation. The sequence is that of Sodium- and chloride-dependent betaine transporter from Homo sapiens (Human).